The sequence spans 306 residues: Pre-mRNA-splicing factor cwf26 (306 aa).

The segment at 130–152 (KAEERRKREEKSSNLDEEELRKS) is disordered. Positions 130–198 (KAEERRKREE…KEQQQGVVQV (69 aa)) form a coiled coil.

Belongs to the CWC26 family. Belongs to the 40S cdc5-associated complex (or cwf complex), a spliceosome sub-complex reminiscent of a late-stage spliceosome composed of the U2, U5 and U6 snRNAs and at least brr2, cdc5, cwf2/prp3, cwf3/syf1, cwf4/syf3, cwf5/ecm2, spp42/cwf6, cwf7/spf27, cwf8, cwf9, cwf10, cwf11, cwf12, prp45/cwf13, cwf14, cwf15, cwf16, cwf17, cwf18, cwf19, cwf20, cwf21, cwf22, cwf23, cwf24, cwf25, cwf26, cyp7/cwf27, cwf28, cwf29/ist3, lea1, msl1, prp5/cwf1, prp10, prp12/sap130, prp17, prp22, sap61, sap62, sap114, sap145, slu7, smb1, smd1, smd3, smf1, smg1 and syf2.

The protein localises to the cytoplasm. Its subcellular location is the nucleus. In terms of biological role, involved in mRNA splicing. The polypeptide is Pre-mRNA-splicing factor cwf26 (cwf26) (Schizosaccharomyces pombe (strain 972 / ATCC 24843) (Fission yeast)).